The primary structure comprises 318 residues: MTRGKPGRAGHDRRHASTGEHGLVIAAHGRHYLVERKGGGLLQCFPRGKRSECAVGDRVIFEATAVDQGVVVRVEERRNLLHRSDQFKSKQLAANIDQVLIMLGTEPGFSEDLLGRALVAAESLGITPLILLNKIDLTARLETARARLALYRALGYAVVELSVHAAPEAAHAVLAAHVAGRSSILIGQSGMGKSSLLNLLIPGVDAQTREISEKLDSGKHTTTFTRLYHLPSGWGHGGTLIDSPGFQEFGLHHLTEGMLERAFPEFRPRLTECRFYNCRHLQEPGCGILGAMAEGKIDPRRHALYAQLLHESEQQKPW.

Positions 1–16 (MTRGKPGRAGHDRRHA) are enriched in basic residues. Positions 1–21 (MTRGKPGRAGHDRRHASTGEH) are disordered. The region spanning 84–249 (SDQFKSKQLA…LIDSPGFQEF (166 aa)) is the CP-type G domain. GTP is bound by residues 133 to 136 (NKID) and 187 to 195 (GQSGMGKSS). Zn(2+) is bound by residues Cys273, Cys278, His280, and Cys286.

The protein belongs to the TRAFAC class YlqF/YawG GTPase family. RsgA subfamily. Monomer. Associates with 30S ribosomal subunit, binds 16S rRNA. It depends on Zn(2+) as a cofactor.

The protein localises to the cytoplasm. One of several proteins that assist in the late maturation steps of the functional core of the 30S ribosomal subunit. Helps release RbfA from mature subunits. May play a role in the assembly of ribosomal proteins into the subunit. Circularly permuted GTPase that catalyzes slow GTP hydrolysis, GTPase activity is stimulated by the 30S ribosomal subunit. The sequence is that of Small ribosomal subunit biogenesis GTPase RsgA from Ralstonia nicotianae (strain ATCC BAA-1114 / GMI1000) (Ralstonia solanacearum).